The primary structure comprises 281 residues: Histidine biosynthesis bifunctional protein hisIE, chloroplastic (281 aa).

The transit peptide at 1–50 (MAVSYNALAQSLARSSCFIPKPYSFRDTKLRSRSNVVFACNDNKNIALQA) directs the protein to the chloroplast. Residues 51 to 178 (KVDNLLDRIK…NKLALTTLYS (128 aa)) form a phosphoribosyl-AMP cyclohydrolase region. The interval 179 to 281 (LESIISKRKE…GIEEKQNRTK (103 aa)) is phosphoribosyl-ATP pyrophosphohydrolase.

The protein in the N-terminal section; belongs to the PRA-CH family. This sequence in the C-terminal section; belongs to the PRA-PH family. As to expression, ubiquitously expressed throughout development.

Its subcellular location is the plastid. The protein resides in the chloroplast. The enzyme catalyses 1-(5-phospho-beta-D-ribosyl)-ATP + H2O = 1-(5-phospho-beta-D-ribosyl)-5'-AMP + diphosphate + H(+). The catalysed reaction is 1-(5-phospho-beta-D-ribosyl)-5'-AMP + H2O = 1-(5-phospho-beta-D-ribosyl)-5-[(5-phospho-beta-D-ribosylamino)methylideneamino]imidazole-4-carboxamide. It functions in the pathway amino-acid biosynthesis; L-histidine biosynthesis; L-histidine from 5-phospho-alpha-D-ribose 1-diphosphate: step 2/9. The protein operates within amino-acid biosynthesis; L-histidine biosynthesis; L-histidine from 5-phospho-alpha-D-ribose 1-diphosphate: step 3/9. This is Histidine biosynthesis bifunctional protein hisIE, chloroplastic (HISN2) from Arabidopsis thaliana (Mouse-ear cress).